The sequence spans 614 residues: UvrABC system protein C (614 aa).

Residues threonine 14–isoleucine 91 enclose the GIY-YIG domain. One can recognise a UVR domain in the interval asparagine 196–leucine 231. Residues leucine 595–proline 614 form a disordered region.

The protein belongs to the UvrC family. As to quaternary structure, interacts with UvrB in an incision complex.

It is found in the cytoplasm. Its function is as follows. The UvrABC repair system catalyzes the recognition and processing of DNA lesions. UvrC both incises the 5' and 3' sides of the lesion. The N-terminal half is responsible for the 3' incision and the C-terminal half is responsible for the 5' incision. The sequence is that of UvrABC system protein C from Streptococcus pneumoniae (strain Taiwan19F-14).